The following is a 2027-amino-acid chain: Mediator of RNA polymerase II transcription subunit 12 (2027 aa).

At Tyr-13 the chain carries Phosphotyrosine. Disordered stretches follow at residues 170-191, 474-516, 538-563, and 1088-1113; these read QSTS…TPST, GAPG…MDID, MPCE…PPKE, and TVTG…QGGR. Residues Ser-482, Ser-512, Ser-545, and Ser-547 each carry the phosphoserine modification. Over residues 549 to 563 the composition is skewed to basic and acidic residues; that stretch reads EKPDVEKEVKPPPKE. Phosphoserine occurs at positions 1105 and 1116. Residues 1241–1258 are compositionally biased toward low complexity; that stretch reads AETGSSSGSTASNMPSSS. Disordered regions lie at residues 1241-1262, 1297-1321, and 1585-1676; these read AETG…KTKP, ELEK…KSMS, and YLEP…PGSI. 2 stretches are compositionally biased toward basic and acidic residues: residues 1297–1316 and 1605–1618; these read ELEK…DRQK and EPEK…KTDK. Residues 1463-1901 form an interaction with CTNNB1 and GLI3 region; it reads LAKKLQKELG…VRSTAILPEQ (439 aa). Residues 1631–1640 show a composition bias toward basic residues; it reads KKSTKGKKRS. Position 1645 is an N6-acetyllysine (Lys-1645). Residue Arg-1746 is modified to Asymmetric dimethylarginine; alternate. Arg-1746 is subject to Omega-N-methylarginine; alternate. Arg-1757 is subject to Omega-N-methylarginine. Residues 1805-1848 are disordered; that stretch reads QHTGPAGTMVPPSYSSQPYQSTHPSTNPTLVDPTRHLQQRPSGY. Low complexity predominate over residues 1815-1830; that stretch reads PPSYSSQPYQSTHPST. Asymmetric dimethylarginine is present on residues Arg-1844 and Arg-1865. Composition is skewed to low complexity over residues 1965-1975, 1983-1999, and 2008-2021; these read QHQQQQQQQAA, SQPQ…QQQQ, and LQQQ…QPST. Disordered regions lie at residues 1965-1999 and 2008-2027; these read QHQQ…QQQQ and LQQQ…FGRY.

Belongs to the Mediator complex subunit 12 family. As to quaternary structure, component of the Mediator complex, which is composed of MED1, MED4, MED6, MED7, MED8, MED9, MED10, MED11, MED12, MED13, MED13L, MED14, MED15, MED16, MED17, MED18, MED19, MED20, MED21, MED22, MED23, MED24, MED25, MED26, MED27, MED29, MED30, MED31, CCNC, CDK8 and CDC2L6/CDK11. The MED12, MED13, CCNC and CDK8 subunits form a distinct module termed the CDK8 module. Mediator containing the CDK8 module is less active than Mediator lacking this module in supporting transcriptional activation. Individual preparations of the Mediator complex lacking one or more distinct subunits have been variously termed ARC, CRSP, DRIP, PC2, SMCC and TRAP. Also interacts with CTNNB1 and GLI3.

The protein resides in the nucleus. In terms of biological role, component of the Mediator complex, a coactivator involved in the regulated transcription of nearly all RNA polymerase II-dependent genes. Mediator functions as a bridge to convey information from gene-specific regulatory proteins to the basal RNA polymerase II transcription machinery. Mediator is recruited to promoters by direct interactions with regulatory proteins and serves as a scaffold for the assembly of a functional preinitiation complex with RNA polymerase II and the general transcription factors. This subunit may specifically regulate transcription of targets of the Wnt signaling pathway and SHH signaling pathway. This is Mediator of RNA polymerase II transcription subunit 12 (MED12) from Pan troglodytes (Chimpanzee).